We begin with the raw amino-acid sequence, 352 residues long: Guanine nucleotide-binding protein alpha-7 subunit (352 aa).

G2 carries N-myristoyl glycine lipidation. Residue C4 is the site of S-palmitoyl cysteine attachment. The G-alpha domain maps to 32–352; that stretch reads RIIKLLLLGA…AKNLKSMGLC (321 aa). The tract at residues 35 to 48 is G1 motif; it reads KLLLLGAGESGKST. GTP is bound by residues 40–47, 174–180, 199–203, 268–271, and A324; these read GAGESGKS, LRTRIKT, DVGGQ, and NKKD. Residues S47 and T180 each coordinate Mg(2+). The tract at residues 172-180 is G2 motif; it reads DLLRTRIKT. The interval 195 to 204 is G3 motif; that stretch reads FRVIDVGGQR. The interval 264–271 is G4 motif; it reads ILFLNKKD. A G5 motif region spans residues 322–327; it reads TCATDT.

This sequence belongs to the G-alpha family. G(i/o/t/z) subfamily. G proteins are composed of 3 units; alpha, beta and gamma. The alpha chain contains the guanine nucleotide binding site.

In terms of biological role, guanine nucleotide-binding proteins (G proteins) are involved as modulators or transducers in various transmembrane signaling systems. This Caenorhabditis elegans protein is Guanine nucleotide-binding protein alpha-7 subunit (gpa-7).